The primary structure comprises 438 residues: 23S rRNA (uracil(1939)-C(5))-methyltransferase RlmD (438 aa).

Residues 11–69 (LQPESKHQQVLVEKLDHQGAGIAYLNKKPLFIDGTLPGEEVVTQLTESKSKFARGKLIK) form the TRAM domain. [4Fe-4S] cluster is bound by residues Cys-82, Cys-88, Cys-91, and Cys-169. Residues Gln-272, Phe-301, Asn-306, Glu-322, Asn-349, and Asp-370 each coordinate S-adenosyl-L-methionine. Residue Cys-396 is the Nucleophile of the active site.

The protein belongs to the class I-like SAM-binding methyltransferase superfamily. RNA M5U methyltransferase family. RlmD subfamily.

The enzyme catalyses uridine(1939) in 23S rRNA + S-adenosyl-L-methionine = 5-methyluridine(1939) in 23S rRNA + S-adenosyl-L-homocysteine + H(+). In terms of biological role, catalyzes the formation of 5-methyl-uridine at position 1939 (m5U1939) in 23S rRNA. This Vibrio vulnificus (strain CMCP6) protein is 23S rRNA (uracil(1939)-C(5))-methyltransferase RlmD.